The chain runs to 481 residues: MLLRLYNTKTKSLSEVKNFSDIKVYACGPTVYNYAHIGNFRTYIFEDLLIKSLRLLKYNVNYAMNITDIGHLTGEFDEGEDKVVKAARERGLTVYEISRFFTEAFFCDCEKLNIVRPDKVLIASEYIASMIEVIKVLEQNGFTYFVNGNVYFDTSLFKSYGQMAGINLNDFEFSSVSRVEVDPSKKNKSDFVLWFTNSKFKDQEMKWDSPWGFGYPSWHLECAAMNLDCFRSTLDIHLGGVDHIGVHHINEIAIAECYLNRMWCDIFVHGEFLIMEDEKMSKSNNNFITIQDLETNGFSPLDFRYFCLTAHYRTQLKFTFNNLRACKVARKNMLNKLTAVFSSLNQFDLLLLSKNYENIESVLEKRYYDSFLEKIAFDLSIPQALALLWDIIKDDNLSALSKLRLTFKFDEVLSLGLKEGVFREIEKDRINIDDAMNSLLEERRLAKIRKDFKRADEIREYFYSKGFVLIDTEEGTKVKRG.

Cysteine 27 is a Zn(2+) binding site. A 'HIGH' region motif is present at residues 29 to 39 (PTVYNYAHIGN). Zn(2+) is bound by residues cysteine 222, histidine 247, and glutamate 251. The 'KMSKS' region signature appears at 279–283 (KMSKS). Residue lysine 282 participates in ATP binding.

This sequence belongs to the class-I aminoacyl-tRNA synthetase family. As to quaternary structure, monomer. Requires Zn(2+) as cofactor.

The protein localises to the cytoplasm. The enzyme catalyses tRNA(Cys) + L-cysteine + ATP = L-cysteinyl-tRNA(Cys) + AMP + diphosphate. In Borrelia turicatae (strain 91E135), this protein is Cysteine--tRNA ligase.